A 188-amino-acid chain; its full sequence is MMGNDSYSSNRGSSRDVLSFLQNFLGGFYAKYGIEVKLVGGLSLSKFYYAFDAERNQFLARHFLPVLSYIKKDFNARAALGIVNVDIYEPGFNFIFGLAHPGLKVAVVSLYRLYPEFYGNPPDRKLLKERALKEVMHELGHVFGLGHCPNPKCVMHFSNSIIDTDIKSWMYCESCLRKLEKNLARSHV.

His-137 provides a ligand contact to Zn(2+). Glu-138 (proton acceptor) is an active-site residue. His-141, His-147, Cys-148, Cys-153, Cys-172, and Cys-175 together coordinate Zn(2+).

It belongs to the peptidase M54 family. As to quaternary structure, monomer. It depends on Zn(2+) as a cofactor.

Its function is as follows. Probable zinc metalloprotease whose natural substrate is unknown. This is Archaemetzincin from Pyrococcus horikoshii (strain ATCC 700860 / DSM 12428 / JCM 9974 / NBRC 100139 / OT-3).